Here is a 371-residue protein sequence, read N- to C-terminus: Aspartate-semialdehyde dehydrogenase (371 aa).

NADP(+) contacts are provided by residues 11 to 14 (RGMV), 38 to 39 (TS), and Q75. R104 contacts phosphate. C137 serves as the catalytic Acyl-thioester intermediate. Residue Q164 coordinates substrate. 167–168 (SG) contributes to the NADP(+) binding site. Substrate is bound at residue E243. Phosphate is bound at residue K246. R269 contributes to the substrate binding site. H276 (proton acceptor) is an active-site residue. Residue Q352 coordinates NADP(+).

Belongs to the aspartate-semialdehyde dehydrogenase family. Homodimer.

It carries out the reaction L-aspartate 4-semialdehyde + phosphate + NADP(+) = 4-phospho-L-aspartate + NADPH + H(+). It participates in amino-acid biosynthesis; L-lysine biosynthesis via DAP pathway; (S)-tetrahydrodipicolinate from L-aspartate: step 2/4. The protein operates within amino-acid biosynthesis; L-methionine biosynthesis via de novo pathway; L-homoserine from L-aspartate: step 2/3. It functions in the pathway amino-acid biosynthesis; L-threonine biosynthesis; L-threonine from L-aspartate: step 2/5. Its function is as follows. Catalyzes the NADPH-dependent formation of L-aspartate-semialdehyde (L-ASA) by the reductive dephosphorylation of L-aspartyl-4-phosphate. The protein is Aspartate-semialdehyde dehydrogenase of Buchnera aphidicola subsp. Acyrthosiphon pisum (strain APS) (Acyrthosiphon pisum symbiotic bacterium).